We begin with the raw amino-acid sequence, 214 residues long: Thiamine-phosphate synthase (214 aa).

Residues 37 to 41 (QYREK) and Asn73 contribute to the 4-amino-2-methyl-5-(diphosphooxymethyl)pyrimidine site. 2 residues coordinate Mg(2+): Asp74 and Asp93. Ser112 provides a ligand contact to 4-amino-2-methyl-5-(diphosphooxymethyl)pyrimidine. Residue 139–141 (TIS) coordinates 2-[(2R,5Z)-2-carboxy-4-methylthiazol-5(2H)-ylidene]ethyl phosphate. A 4-amino-2-methyl-5-(diphosphooxymethyl)pyrimidine-binding site is contributed by Lys142. Residues Gly171 and 191-192 (IS) each bind 2-[(2R,5Z)-2-carboxy-4-methylthiazol-5(2H)-ylidene]ethyl phosphate.

Belongs to the thiamine-phosphate synthase family. It depends on Mg(2+) as a cofactor.

The catalysed reaction is 2-[(2R,5Z)-2-carboxy-4-methylthiazol-5(2H)-ylidene]ethyl phosphate + 4-amino-2-methyl-5-(diphosphooxymethyl)pyrimidine + 2 H(+) = thiamine phosphate + CO2 + diphosphate. It catalyses the reaction 2-(2-carboxy-4-methylthiazol-5-yl)ethyl phosphate + 4-amino-2-methyl-5-(diphosphooxymethyl)pyrimidine + 2 H(+) = thiamine phosphate + CO2 + diphosphate. It carries out the reaction 4-methyl-5-(2-phosphooxyethyl)-thiazole + 4-amino-2-methyl-5-(diphosphooxymethyl)pyrimidine + H(+) = thiamine phosphate + diphosphate. The protein operates within cofactor biosynthesis; thiamine diphosphate biosynthesis; thiamine phosphate from 4-amino-2-methyl-5-diphosphomethylpyrimidine and 4-methyl-5-(2-phosphoethyl)-thiazole: step 1/1. Functionally, condenses 4-methyl-5-(beta-hydroxyethyl)thiazole monophosphate (THZ-P) and 2-methyl-4-amino-5-hydroxymethyl pyrimidine pyrophosphate (HMP-PP) to form thiamine monophosphate (TMP). The sequence is that of Thiamine-phosphate synthase from Listeria monocytogenes serotype 4a (strain HCC23).